The sequence spans 35 residues: Small toxic polypeptide LdrD (35 aa).

A helical transmembrane segment spans residues 10 to 32 (FWHDLAAPVIAGILASMIVNWLN).

The protein belongs to the Ldr toxic peptide family.

The protein resides in the cell inner membrane. Its function is as follows. Toxic component of a type I toxin-antitoxin (TA) system. Overexpression causes rapid cell killing and nucleoid condensation of the host cell. Overexpression induces stress-response and a number of membrane protein genes. May inhibit ATP synthesis due to its insertion in the cell inner membrane. The polypeptide is Small toxic polypeptide LdrD (ldrD) (Escherichia coli (strain K12)).